A 518-amino-acid polypeptide reads, in one-letter code: Flagellin (518 aa).

Belongs to the bacterial flagellin family.

It is found in the secreted. The protein localises to the bacterial flagellum. Functionally, flagellin is the subunit protein which polymerizes to form the filaments of bacterial flagella. This chain is Flagellin (flaA), found in Aquifex aeolicus (strain VF5).